Here is a 252-residue protein sequence, read N- to C-terminus: Phosphate import ATP-binding protein PstB 1 (252 aa).

The 242-residue stretch at 6-247 (LQIRDLSVYY…PKRKETEDYI (242 aa)) folds into the ABC transporter domain. Residue 38-45 (GPSGSGKS) coordinates ATP.

This sequence belongs to the ABC transporter superfamily. Phosphate importer (TC 3.A.1.7) family. The complex is composed of two ATP-binding proteins (PstB), two transmembrane proteins (PstC and PstA) and a solute-binding protein (PstS).

The protein localises to the cell membrane. The catalysed reaction is phosphate(out) + ATP + H2O = ADP + 2 phosphate(in) + H(+). In terms of biological role, part of the ABC transporter complex PstSACB involved in phosphate import. Responsible for energy coupling to the transport system. The protein is Phosphate import ATP-binding protein PstB 1 of Streptococcus pyogenes serotype M6 (strain ATCC BAA-946 / MGAS10394).